Consider the following 180-residue polypeptide: ADP-ribosylation factor 4 (180 aa).

A lipid anchor (N-myristoyl glycine) is attached at glycine 2. Residues 24–31 (GLDAAGKT), 67–71 (DVGGQ), and 126–129 (NKQD) contribute to the GTP site. Serine 147 is modified (phosphoserine).

This sequence belongs to the small GTPase superfamily. Arf family. Forms a complex containing RAB11A, ASAP1, RAB3IP, RAP11FIP3 and ARF4; the complex promotes preciliary trafficking; the complex binds to RHO in photoreceptor cells and promotes RHO ciliary transport.

The protein localises to the golgi apparatus. Its subcellular location is the membrane. Its function is as follows. GTP-binding protein that functions as an allosteric activator of the cholera toxin catalytic subunit, an ADP-ribosyltransferase. Involved in protein trafficking; may modulate vesicle budding and uncoating within the Golgi apparatus. Part of the ciliary targeting complex containing Rab11, ASAP1, Rabin8/RAB3IP, RAB11FIP3 and ARF4, which direct preciliary vesicle trafficking to mother centriole and ciliogenesis initiation. The chain is ADP-ribosylation factor 4 (ARF4) from Homo sapiens (Human).